Here is a 1198-residue protein sequence, read N- to C-terminus: Chromosome partition protein Smc (1198 aa).

40–47 (PNGSGKSN) contacts ATP. 2 coiled-coil regions span residues 175 to 211 (ITKYRMRKREALKRLDETEHNLERIRDILAEIEGQLG) and 322 to 524 (LGEQ…LAKK). Residues 534–647 (CGTLADLLQV…VTDMEAATRV (114 aa)) enclose the SMC hinge domain. Positions 687-1042 (SREIQELRQE…AELDKTMSER (356 aa)) form a coiled coil. The tract at residues 785–818 (AEEQSKLTDSIQEAQEALARQEEKNRQASREMEQ) is disordered. Residues 803 to 818 (ARQEEKNRQASREMEQ) are compositionally biased toward basic and acidic residues.

It belongs to the SMC family. Homodimer.

It is found in the cytoplasm. Its function is as follows. Required for chromosome condensation and partitioning. This Desulfitobacterium hafniense (strain Y51) protein is Chromosome partition protein Smc.